The following is a 345-amino-acid chain: Ketol-acid reductoisomerase (NADP(+)) (345 aa).

The region spanning 2 to 182 is the KARI N-terminal Rossmann domain; it reads AKVYHDSSAD…GTTRAGVLET (181 aa). NADP(+) contacts are provided by residues 25–28, Arg-48, Ser-51, Ser-53, and 83–86; these read YGSQ and DTEQ. Residue His-108 is part of the active site. Residue Gly-134 coordinates NADP(+). Residues 183–328 enclose the KARI C-terminal knotted domain; that stretch reads TFKEETETDL…AQLRDMMTFL (146 aa). The Mg(2+) site is built by Asp-191, Glu-195, Glu-227, and Glu-231. Ser-252 provides a ligand contact to substrate.

The protein belongs to the ketol-acid reductoisomerase family. Mg(2+) serves as cofactor.

It catalyses the reaction (2R)-2,3-dihydroxy-3-methylbutanoate + NADP(+) = (2S)-2-acetolactate + NADPH + H(+). It carries out the reaction (2R,3R)-2,3-dihydroxy-3-methylpentanoate + NADP(+) = (S)-2-ethyl-2-hydroxy-3-oxobutanoate + NADPH + H(+). The protein operates within amino-acid biosynthesis; L-isoleucine biosynthesis; L-isoleucine from 2-oxobutanoate: step 2/4. It participates in amino-acid biosynthesis; L-valine biosynthesis; L-valine from pyruvate: step 2/4. In terms of biological role, involved in the biosynthesis of branched-chain amino acids (BCAA). Catalyzes an alkyl-migration followed by a ketol-acid reduction of (S)-2-acetolactate (S2AL) to yield (R)-2,3-dihydroxy-isovalerate. In the isomerase reaction, S2AL is rearranged via a Mg-dependent methyl migration to produce 3-hydroxy-3-methyl-2-ketobutyrate (HMKB). In the reductase reaction, this 2-ketoacid undergoes a metal-dependent reduction by NADPH to yield (R)-2,3-dihydroxy-isovalerate. This is Ketol-acid reductoisomerase (NADP(+)) from Koribacter versatilis (strain Ellin345).